A 336-amino-acid chain; its full sequence is MNNNTTCIQPSMISSMALPIIYILLCIVGVFGNTLSQWIFLTKIGKKTSTHIYLSHLVTANLLVCSAMPFMSIYFLKGFQWEYQSAQCRVVNFLGTLSMHASMFVSLLILSWIAISRYATLMQKDSSQETTSCYEKIFYGHLLKKFRQPNFARKLCIYIWGVVLGIIIPVTVYYSVIEATEGEESLCYNRQMELGAMISQIAGLIGTTFIGFSFLVVLTSYYSFVSHLRKIRTCTSIMEKDLTYSSVKRHLLVIQILLIVCFLPYSIFKPIFYVLHQRDNCQQLNYLIETKNILTCLASARSSTDPIIFLLLDKTFKKTLYNLFTKSNSAHMQSYG.

Topologically, residues 1 to 11 (MNNNTTCIQPS) are extracellular. N-linked (GlcNAc...) asparagine glycans are attached at residues N3 and N4. A helical transmembrane segment spans residues 12–32 (MISSMALPIIYILLCIVGVFG). At 33 to 55 (NTLSQWIFLTKIGKKTSTHIYLS) the chain is on the cytoplasmic side. A helical transmembrane segment spans residues 56-76 (HLVTANLLVCSAMPFMSIYFL). The Extracellular portion of the chain corresponds to 77-92 (KGFQWEYQSAQCRVVN). A helical transmembrane segment spans residues 93–115 (FLGTLSMHASMFVSLLILSWIAI). At 116–156 (SRYATLMQKDSSQETTSCYEKIFYGHLLKKFRQPNFARKLC) the chain is on the cytoplasmic side. A helical membrane pass occupies residues 157 to 177 (IYIWGVVLGIIIPVTVYYSVI). Residues 178–197 (EATEGEESLCYNRQMELGAM) lie on the Extracellular side of the membrane. A helical transmembrane segment spans residues 198 to 218 (ISQIAGLIGTTFIGFSFLVVL). Residues 219–251 (TSYYSFVSHLRKIRTCTSIMEKDLTYSSVKRHL) lie on the Cytoplasmic side of the membrane. Residues 252–272 (LVIQILLIVCFLPYSIFKPIF) traverse the membrane as a helical segment. The Extracellular segment spans residues 273 to 336 (YVLHQRDNCQ…SNSAHMQSYG (64 aa)).

The protein belongs to the G-protein coupled receptor 1 family.

It localises to the cell membrane. Its function is as follows. Orphan receptor. In Homo sapiens (Human), this protein is Probable G-protein coupled receptor 82 (GPR82).